The chain runs to 194 residues: Large ribosomal subunit protein bL9 (194 aa).

Residues 148–194 (QDEAERQARGENVINSQFEEDRAAEAEAAQDMAEGGAGSFEGDHYEA) are disordered.

This sequence belongs to the bacterial ribosomal protein bL9 family.

Its function is as follows. Binds to the 23S rRNA. This Caulobacter vibrioides (strain ATCC 19089 / CIP 103742 / CB 15) (Caulobacter crescentus) protein is Large ribosomal subunit protein bL9.